Consider the following 512-residue polypeptide: MATLLATPIFSPLASSPARNRLSCSKIRFGSKNGKILNSDGAQKLNLSKFRKPDGQRFLQMGSSKEMNFERKLSVQAMDGAGTGNTSTISRNVIAISHLLVSLGIILAADYFLKQAFVAASIKFPSALFGMFCIFSVLMIFDSVVPAAANGLMNFFEPAFLFIQRWLPLFYVPSLVVLPLSVRDIPAASGVKICYIVAGGWLASLCVAGYTAIAVRKMVKTEMTEAEPMAKPSPFSTLELWSWSGIFVVSFVGALFYPNSLGTSARTSLPFLLSSTVLGYIVGSGLPSSIKKVFHPIICCALSAVLAALAFGYASGSGLDPVLGNYLTKVASDPGAGDILMGFLGSVILSFAFSMFKQRKLVKRHAAEIFTSVIVSTVFSLYSTALVGRLVGLEPSLTVSILPRCITVALALSIVSLFEGTNSSLTAAVVVVTGLIGANFVQVVLDKLRLRDPIARGIATASSAHGLGTAALSAKEPEALPFCAIAYALTGIFGSLLCSVPAVRQSLLAVVG.

Residues 1 to 76 (MATLLATPIF…MNFERKLSVQ (76 aa)) constitute a chloroplast transit peptide. Ala77 carries the N-acetylalanine modification. The next 12 membrane-spanning stretches (helical) occupy residues 93 to 113 (VIAI…DYFL), 127 to 147 (ALFG…VVPA), 160 to 180 (FLFI…VLPL), 195 to 215 (YIVA…AIAV), 238 to 258 (LELW…LFYP), 270 to 290 (PFLL…PSSI), 293 to 313 (VFHP…AFGY), 336 to 356 (AGDI…FSMF), 367 to 387 (AEIF…TALV), 398 to 418 (TVSI…VSLF), 425 to 445 (LTAA…QVVL), and 480 to 500 (LPFC…LCSV).

The protein belongs to the CidB/LrgB family. As to expression, expressed in leaves, stems and flowers, but not in roots.

Its subcellular location is the plastid. The protein localises to the chloroplast membrane. In terms of biological role, glycolate/glycerate transporter required for photorespiration. The protein is Plastidal glycolate/glycerate translocator 1, chloroplastic (PLGG1) of Arabidopsis thaliana (Mouse-ear cress).